The chain runs to 502 residues: Glycerol kinase (502 aa).

ADP is bound at residue Thr14. 3 residues coordinate ATP: Thr14, Thr15, and Ser16. Residue Thr14 coordinates sn-glycerol 3-phosphate. Arg18 is a binding site for ADP. Sn-glycerol 3-phosphate contacts are provided by Arg84, Glu85, Tyr137, and Asp247. 5 residues coordinate glycerol: Arg84, Glu85, Tyr137, Asp247, and Gln248. ADP-binding residues include Thr269 and Gly312. The ATP site is built by Thr269, Gly312, Gln316, and Gly413. ADP contacts are provided by Gly413 and Asn417.

The protein belongs to the FGGY kinase family. As to quaternary structure, homotetramer and homodimer (in equilibrium). Heterodimer with EIIA-Glc. Binds 1 zinc ion per glycerol kinase EIIA-Glc dimer. The zinc ion is important for dimerization.

The catalysed reaction is glycerol + ATP = sn-glycerol 3-phosphate + ADP + H(+). It functions in the pathway polyol metabolism; glycerol degradation via glycerol kinase pathway; sn-glycerol 3-phosphate from glycerol: step 1/1. With respect to regulation, activity of this regulatory enzyme is affected by several metabolites. Allosterically and non-competitively inhibited by fructose 1,6-bisphosphate (FBP) and unphosphorylated phosphocarrier protein EIIA-Glc (III-Glc), an integral component of the bacterial phosphotransferase (PTS) system. Functionally, key enzyme in the regulation of glycerol uptake and metabolism. Catalyzes the phosphorylation of glycerol to yield sn-glycerol 3-phosphate. The protein is Glycerol kinase of Photorhabdus laumondii subsp. laumondii (strain DSM 15139 / CIP 105565 / TT01) (Photorhabdus luminescens subsp. laumondii).